The sequence spans 481 residues: METMPNWLMQRAFLTPDRTAIEIEEEKVTFMQLHEKVVSVCEHLTHIGVKRGQKVAVLMKNGMEMITVIHALSYVGAVAVLLNTRLSREELLWQMDDAEVICLVTDQDFDAKDIPVYSFAEVMNGPKEEASIQEEFSLEEAMTIIYTSGTTGKPKGVILTYGNHWASAVGSSLNLGLRDDDCWLACMPMFHVGGLSLLMKNIMYGMRILLVPKYDADFIHKALQTRGVTIISVVSKMLTDLLERLGAETYPSSLRCMLLGGGPAPKPLLETCVEKGIPVYQTYGMTETSSQICTLSADYMLTKVGSAGKPLFQCQLRIEKDGVVVPAFTEGEIVVKGPNVTGGYFNREDATRETIQNGWLHTGDIGYLDEEGFLYVLDRRSDLIISGGENIYPAQIEEVLLSHPAVAEAGVVGMTDDKWGQVPVAFVVKSGEVTEEEIIHFCEAKLAKYKVPKKACFLEELPRNASKKLLRRELRQLVEEM.

Belongs to the ATP-dependent AMP-binding enzyme family. MenE subfamily.

It carries out the reaction 2-succinylbenzoate + ATP + CoA = 2-succinylbenzoyl-CoA + AMP + diphosphate. It functions in the pathway quinol/quinone metabolism; 1,4-dihydroxy-2-naphthoate biosynthesis; 1,4-dihydroxy-2-naphthoate from chorismate: step 5/7. It participates in quinol/quinone metabolism; menaquinone biosynthesis. Functionally, converts 2-succinylbenzoate (OSB) to 2-succinylbenzoyl-CoA (OSB-CoA). This chain is 2-succinylbenzoate--CoA ligase, found in Bacillus cereus (strain ATCC 10987 / NRS 248).